Here is a 152-residue protein sequence, read N- to C-terminus: Large ribosomal subunit protein bL9 (152 aa).

Belongs to the bacterial ribosomal protein bL9 family.

Functionally, binds to the 23S rRNA. The sequence is that of Large ribosomal subunit protein bL9 from Parasynechococcus marenigrum (strain WH8102).